A 270-amino-acid polypeptide reads, in one-letter code: tRNA pseudouridine synthase A (270 aa).

Aspartate 60 (nucleophile) is an active-site residue. Residues 107 to 111 (FHARF) are RNA binding. Tyrosine 118 is a binding site for substrate. The interval 168–172 (QCQSR) is interaction with tRNA.

Belongs to the tRNA pseudouridine synthase TruA family. In terms of assembly, homodimer.

It catalyses the reaction uridine(38/39/40) in tRNA = pseudouridine(38/39/40) in tRNA. Functionally, formation of pseudouridine at positions 38, 39 and 40 in the anticodon stem and loop of transfer RNAs. The protein is tRNA pseudouridine synthase A of Shigella boydii serotype 18 (strain CDC 3083-94 / BS512).